The sequence spans 78 residues: DNA-directed RNA polymerase subunit Rpo5 (78 aa).

Belongs to the archaeal Rpo5/eukaryotic RPB5 RNA polymerase subunit family. Part of the RNA polymerase complex.

It is found in the cytoplasm. It catalyses the reaction RNA(n) + a ribonucleoside 5'-triphosphate = RNA(n+1) + diphosphate. In terms of biological role, DNA-dependent RNA polymerase (RNAP) catalyzes the transcription of DNA into RNA using the four ribonucleoside triphosphates as substrates. This chain is DNA-directed RNA polymerase subunit Rpo5, found in Methanococcus vannielii (strain ATCC 35089 / DSM 1224 / JCM 13029 / OCM 148 / SB).